The chain runs to 57 residues: uncharacterized protein (57 aa).

Residues 34-54 (AALLDAAALVVIPGLLTAAAV) traverse the membrane as a helical segment.

Its subcellular location is the membrane. This is an uncharacterized protein from Dictyostelium discoideum (Social amoeba).